The primary structure comprises 234 residues: MSTPHINSKKDDFSDIVLMPGDPVRAKYIAEKYLSNFVQVNDTRLMLAYTGFYKNRKISIMSHGIGIPSASLYTRELIIEFNVKKIIRIGTCGAVRDDIKLRDIVISMGASTDSKVNRIRFNDHDFAAIADFDMIYNIVSISKKMKIKVSIGNFFTTDSFYNDDKKMLNILKKYNIIGVDMETAGIYGVASELKVQALSICTVSDHITNKEFLSSKERESSFNDMIELALESVL.

A purine D-ribonucleoside is bound at residue His5. Residues Gly21, Arg25, Arg44, and 88 to 91 (RIGT) each bind phosphate. Residues 180-182 (DME) and 204-205 (SD) contribute to the a purine D-ribonucleoside site. Catalysis depends on Asp205, which acts as the Proton donor.

The protein belongs to the PNP/UDP phosphorylase family. In terms of assembly, homohexamer; trimer of homodimers.

The enzyme catalyses a purine D-ribonucleoside + phosphate = a purine nucleobase + alpha-D-ribose 1-phosphate. It catalyses the reaction a purine 2'-deoxy-D-ribonucleoside + phosphate = a purine nucleobase + 2-deoxy-alpha-D-ribose 1-phosphate. Functionally, catalyzes the reversible phosphorolytic breakdown of the N-glycosidic bond in the beta-(deoxy)ribonucleoside molecules, with the formation of the corresponding free purine bases and pentose-1-phosphate. In Buchnera aphidicola subsp. Acyrthosiphon pisum (strain APS) (Acyrthosiphon pisum symbiotic bacterium), this protein is Purine nucleoside phosphorylase DeoD-type.